Consider the following 509-residue polypeptide: GMP synthase [glutamine-hydrolyzing] (509 aa).

Residues 4–193 (NVLILDFGSQ…LVKIAQVPQN (190 aa)) form the Glutamine amidotransferase type-1 domain. The Nucleophile role is filled by Cys79. Active-site residues include His167 and Glu169. In terms of domain architecture, GMPS ATP-PPase spans 194-384 (FTPNAFVSDM…LGIDAELLGR (191 aa)). 221-227 (SGGVDST) is a binding site for ATP.

Homodimer.

It catalyses the reaction XMP + L-glutamine + ATP + H2O = GMP + L-glutamate + AMP + diphosphate + 2 H(+). Its pathway is purine metabolism; GMP biosynthesis; GMP from XMP (L-Gln route): step 1/1. Functionally, catalyzes the synthesis of GMP from XMP. The sequence is that of GMP synthase [glutamine-hydrolyzing] from Flavobacterium psychrophilum (strain ATCC 49511 / DSM 21280 / CIP 103535 / JIP02/86).